We begin with the raw amino-acid sequence, 231 residues long: Uracil-DNA glycosylase (231 aa).

The Proton acceptor role is filled by aspartate 70.

It belongs to the uracil-DNA glycosylase (UDG) superfamily. UNG family.

It localises to the cytoplasm. It catalyses the reaction Hydrolyzes single-stranded DNA or mismatched double-stranded DNA and polynucleotides, releasing free uracil.. Its function is as follows. Excises uracil residues from the DNA which can arise as a result of misincorporation of dUMP residues by DNA polymerase or due to deamination of cytosine. This Pseudomonas fluorescens (strain Pf0-1) protein is Uracil-DNA glycosylase.